Consider the following 128-residue polypeptide: Fluoride-specific ion channel FluC 2 (128 aa).

The next 4 helical transmembrane spans lie at 13 to 35, 40 to 59, 71 to 93, and 97 to 119; these read ALVAVGGAVGAVLRYTVAQAIAG, LAANAAGSLALGALAYEAAA, LLGTGCLSAFTTYSTFAVQTAGL, and WMAANVATTYALGFAGVLVGRAI.

Belongs to the fluoride channel Fluc/FEX (TC 1.A.43) family.

The protein localises to the cell membrane. It carries out the reaction fluoride(in) = fluoride(out). Its function is as follows. Fluoride-specific ion channel. Important for reducing fluoride concentration in the cell, thus reducing its toxicity. The sequence is that of Fluoride-specific ion channel FluC 2 from Halobacterium salinarum (strain ATCC 700922 / JCM 11081 / NRC-1) (Halobacterium halobium).